The chain runs to 205 residues: MFLRHVIVFSLIALLTGCAGLTSREAVQGKGDPAQWREHKQQLSSLDGWQINGKVGIRAPKDSGSGTLFWLQRQDYYDIRLSGPLGRGAARLTGRPGAVALEVANQGRYEATTPETLLQDQLGWKLPVSHLVWWVRGLPAPDSKSSVTLDGDSRLASLEQDGWQVEYLSYVEQNGYWLPERVKLHGQDLDVTLVIKDWQPRKLGQ.

A signal peptide spans 1–17; that stretch reads MFLRHVIVFSLIALLTG. Residue Cys-18 is the site of N-palmitoyl cysteine attachment. Cys-18 carries the S-diacylglycerol cysteine lipid modification.

The protein belongs to the LolB family. As to quaternary structure, monomer.

It localises to the cell outer membrane. Its function is as follows. Plays a critical role in the incorporation of lipoproteins in the outer membrane after they are released by the LolA protein. This chain is Outer-membrane lipoprotein LolB, found in Pseudomonas savastanoi pv. phaseolicola (strain 1448A / Race 6) (Pseudomonas syringae pv. phaseolicola (strain 1448A / Race 6)).